The chain runs to 152 residues: Transcriptional repressor NrdR (152 aa).

A zinc finger lies at 3–34; it reads CPACQHNGTRVLDSRPVDEGRSIRRRRECESC. Residues 49-139 enclose the ATP-cone domain; sequence LIVVKKEGIR…VYRQFKDINV (91 aa).

Belongs to the NrdR family. Zn(2+) serves as cofactor.

Its function is as follows. Negatively regulates transcription of bacterial ribonucleotide reductase nrd genes and operons by binding to NrdR-boxes. The sequence is that of Transcriptional repressor NrdR from Bacillus licheniformis (strain ATCC 14580 / DSM 13 / JCM 2505 / CCUG 7422 / NBRC 12200 / NCIMB 9375 / NCTC 10341 / NRRL NRS-1264 / Gibson 46).